A 399-amino-acid polypeptide reads, in one-letter code: Forkhead box protein I3 (399 aa).

Disordered stretches follow at residues 87–109 (AGAQ…GSAA), 221–287 (KRRR…ASTL), and 307–353 (SSSS…STVG). The segment covering 96–109 (PSASAPASPAGSAA) has biased composition (low complexity). A phosphoserine mark is found at Ser99 and Ser103. Residues 129 to 223 (RPPYSYSALI…DNGNFRRKRR (95 aa)) constitute a DNA-binding region (fork-head). A Nuclear localization signal motif is present at residues 219-225 (RRKRRRR). Polar residues-rich tracts occupy residues 228-248 (ASSN…SSRL) and 258-267 (SPSSILRPSQ). 3 positions are modified to phosphoserine: Ser258, Ser266, and Ser268. 3 stretches are compositionally biased toward polar residues: residues 275 to 287 (TKST…ASTL), 307 to 317 (SSSSMGNQRTL), and 328 to 353 (QLPS…STVG). The short motif at 385–393 (SMVNSLIYP) is the 9aaTAD element.

In terms of processing, phosphorylation promotes the transcription factor activity. Dephosphorylation by protein phosphatase 2A (PP2A) reduces its activity. Specifically expressed in the epithelium in developing ectodermal appendages. Expressed in pharyngeal endoderm and ectoderm. Expressed in pre-placodal ectoderm. Down-regulated as the otic placode is induced. Expressed in teeth and hair follicles throughout embryogenesis. Expressed in mammary glands only during the earliest stages of development.

It is found in the nucleus. Functionally, transcription factor required for pharyngeal arch development, which is involved in hair, ear, jaw and dental development. May act as a pioneer transcription factor during pharyngeal arch development. Required for epithelial cell differentiation within the epidermis. Acts at multiple stages of otic placode induction: necessary for preplacodal ectoderm to execute an inner ear program. Required for hair follicle stem cell specification. Acts downstream of TBX1 for the formation of the thymus and parathyroid glands from the third pharyngeal pouch. This is Forkhead box protein I3 from Mus musculus (Mouse).